A 592-amino-acid polypeptide reads, in one-letter code: Aspartate--tRNA ligase (592 aa).

Glu180 is a binding site for L-aspartate. Residues 204 to 207 are aspartate; the sequence is QLFK. Arg226 contributes to the L-aspartate binding site. ATP contacts are provided by residues 226–228 and Gln235; that span reads RDE. An L-aspartate-binding site is contributed by His455. Glu489 lines the ATP pocket. Arg496 is an L-aspartate binding site. Residue 541–544 coordinates ATP; that stretch reads GFDR.

The protein belongs to the class-II aminoacyl-tRNA synthetase family. Type 1 subfamily. Homodimer.

Its subcellular location is the cytoplasm. The catalysed reaction is tRNA(Asp) + L-aspartate + ATP = L-aspartyl-tRNA(Asp) + AMP + diphosphate. In terms of biological role, catalyzes the attachment of L-aspartate to tRNA(Asp) in a two-step reaction: L-aspartate is first activated by ATP to form Asp-AMP and then transferred to the acceptor end of tRNA(Asp). The polypeptide is Aspartate--tRNA ligase (Clostridium tetani (strain Massachusetts / E88)).